Reading from the N-terminus, the 246-residue chain is Transcription factor A, mitochondrial (246 aa).

Residues 1–42 (MAFLRSMWGVLSALGRSGAAVCIGCGSRLRSPFSFVYLPKCF) constitute a mitochondrion transit peptide. Residues 50 to 118 (PKKPVSSYLR…VYKEKISRFK (69 aa)) constitute a DNA-binding region (HMG box 1). Ser55, Ser56, and Ser61 each carry phosphoserine; by PKA. Thr122 carries the post-translational modification Phosphothreonine. A DNA-binding region (HMG box 2) is located at residues 155–219 (PKRPRSAYNV…RYHNEMKSWE (65 aa)). Phosphoserine; by PKA is present on Ser160. Residues Ser193 and Ser195 each carry the phosphoserine modification.

As to quaternary structure, monomer; binds DNA as a monomer. Homodimer. Component of the mitochondrial transcription initiation complex, composed at least of TFB2M, TFAM and POLRMT. In this complex TFAM recruits POLRMT to the promoter whereas TFB2M induces structural changes in POLRMT to enable promoter opening and trapping of the DNA non-template strand. Upon metabolic stress, forms a complex composed of FOXO3, SIRT3, TFAM and POLRMT. Interacts with TFB1M and TFB2M. Interacts with CLPX; this enhances DNA-binding. Phosphorylation by PKA within the HMG box 1 impairs DNA binding and promotes degradation by the AAA+ Lon protease.

It is found in the mitochondrion. It localises to the mitochondrion matrix. Its subcellular location is the mitochondrion nucleoid. Functionally, binds to the mitochondrial light strand promoter and functions in mitochondrial transcription regulation. Component of the mitochondrial transcription initiation complex, composed at least of TFB2M, TFAM and POLRMT that is required for basal transcription of mitochondrial DNA. In this complex, TFAM recruits POLRMT to a specific promoter whereas TFB2M induces structural changes in POLRMT to enable promoter opening and trapping of the DNA non-template strand. Required for accurate and efficient promoter recognition by the mitochondrial RNA polymerase. Promotes transcription initiation from the HSP1 and the light strand promoter by binding immediately upstream of transcriptional start sites. Is able to unwind DNA. Bends the mitochondrial light strand promoter DNA into a U-turn shape via its HMG boxes. Required for maintenance of normal levels of mitochondrial DNA. May play a role in organizing and compacting mitochondrial DNA. This is Transcription factor A, mitochondrial from Trachypithecus cristatus (Silvered leaf-monkey).